Reading from the N-terminus, the 699-residue chain is Endogenous retrovirus group K member 113 Env polyprotein (699 aa).

The disordered stretch occupies residues 1–47; it reads MNPSEMQRKAPPRRRRHRNRAPLTHKMNKMVTSEEQMKLPSTKKAEP. An N-terminal signal peptide occupies residues 1-89; the sequence is MNPSEMQRKA…ALMIVSMVVS (89 aa). Residues 10-20 show a composition bias toward basic residues; the sequence is APPRRRRHRNR. Residues 90-632 lie on the Extracellular side of the membrane; the sequence is LPMPAGAAAA…NLNPVTWVKT (543 aa). 7 N-linked (GlcNAc...) asparagine glycosylation sites follow: N100, N128, N153, N274, N355, N372, and N461. The fusion peptide stretch occupies residues 466–486; sequence FIFTLIAVIMGLIAVTATAAV. N507, N554, N566, and N585 each carry an N-linked (GlcNAc...) asparagine glycan. A helical membrane pass occupies residues 633–653; that stretch reads IGSTTIINLILILVCLFCLLL. Topologically, residues 654 to 699 are cytoplasmic; that stretch reads VCRCTQQLRRDSDHRERAMMTMAVLSKRKGGNVGKSKRDQIVTVSV.

Belongs to the beta type-B retroviral envelope protein family. HERV class-II K(HML-2) env subfamily. The surface (SU) and transmembrane (TM) proteins form a heterodimer. SU and TM are attached by noncovalent interactions or by a labile interchain disulfide bond. In terms of processing, specific enzymatic cleavages in vivo yield the mature SU and TM proteins.

The protein localises to the cell membrane. It localises to the virion. Its function is as follows. Retroviral envelope proteins mediate receptor recognition and membrane fusion during early infection. Endogenous envelope proteins may have kept, lost or modified their original function during evolution. This endogenous envelope protein has lost its original fusogenic properties. SU mediates receptor recognition. In terms of biological role, TM anchors the envelope heterodimer to the viral membrane through one transmembrane domain. The other hydrophobic domain, called fusion peptide, mediates fusion of the viral membrane with the target cell membrane. In Homo sapiens (Human), this protein is Endogenous retrovirus group K member 113 Env polyprotein (HERVK_113).